A 997-amino-acid polypeptide reads, in one-letter code: FHIP family protein CPIJ015043 (997 aa).

Disordered stretches follow at residues 558–579 (DHRSSQCQSPAQQHLHQQQQLQ) and 759–922 (NVVL…GGAA). Positions 569-579 (QQHLHQQQQLQ) are enriched in low complexity. Residues 763–780 (GGSGPGGPRLSNGGGGTG) show a composition bias toward gly residues. Composition is skewed to low complexity over residues 781-792 (SSITSSLSQTTP) and 830-889 (GSNS…MVGS). Gly residues predominate over residues 911–922 (IGSGTVGGGGAA).

This sequence belongs to the FHIP family.

The protein is FHIP family protein CPIJ015043 of Culex quinquefasciatus (Southern house mosquito).